Consider the following 509-residue polypeptide: Cytochrome P450 monooxygenase ARMGADRAFT_974139 (509 aa).

Residues Ala-4 to Gly-24 traverse the membrane as a helical segment. Residues Asn-96 and Asn-279 are each glycosylated (N-linked (GlcNAc...) asparagine). Cys-439 is a binding site for heme.

This sequence belongs to the cytochrome P450 family. Heme is required as a cofactor.

The protein resides in the membrane. The protein operates within secondary metabolite biosynthesis. Its function is as follows. Cytochrome P450 monooxygenase, part of the gene cluster that mediates the biosynthesis of melleolides, a range of antifungal and phytotoxic polyketide derivatives composed of an orsellinic acid (OA) moiety esterified to various sesquiterpene alcohols. The first step in melleolides biosynthesis is performed by the delta(6)-protoilludene synthase PRO1 which catalyzes the cyclization of farnesyl diphosphate to protoilludene. The orsellinic acid synthase armB produces OA by condensing acetyl-CoA with 3 malonyl-CoA units in a three-round chain elongation reaction folowed by a C2-C7 ring closure. ArmB further catalyzes the trans-esterification of OA to the various sesquiterpene alcohols resulting from the hydroxylation of protoilludene. The melleolides cluster also includes 5 cytochrome P450 monooxygenases, 4 NAD(+)-dependent oxidoreductases, one flavin-dependent oxidoreductase, and one O-methyltransferase. The cytochrome P450 monooxygenases may be involved in protoilludene hydroxylation to elaborate melleolides with multiple alcohol groups, such as melleolide D, which carries alcohol functionalities at C-4, C-5, C-10, and C-13. The role of the NAD(+)-dependent enzymes remains unknown. Numerous melleolides, including arnamial, show 5'-O-methylation of the aromatic moiety which may be catalyzed by the methyltransferase encoded in the cluster. The flavin-dependent oxidoreductase might represent the dehydrogenase yielding the aldehyde in position 1 of arnamial and other melleolides. Finally, several halogenase localized outside of the cluster, are able to catalyze the transfer of a single chlorine atom to the melleolide backbone, resulting in a 6'-chloromelleolide product. In Armillaria gallica (Bulbous honey fungus), this protein is Cytochrome P450 monooxygenase ARMGADRAFT_974139.